We begin with the raw amino-acid sequence, 138 residues long: Putative nickel-responsive regulator (138 aa).

Residues H78, H89, H91, and C97 each contribute to the Ni(2+) site.

The protein belongs to the transcriptional regulatory CopG/NikR family. The cofactor is Ni(2+).

Transcriptional regulator. This chain is Putative nickel-responsive regulator, found in Pyrococcus horikoshii (strain ATCC 700860 / DSM 12428 / JCM 9974 / NBRC 100139 / OT-3).